A 271-amino-acid polypeptide reads, in one-letter code: Formamidopyrimidine-DNA glycosylase (271 aa).

Catalysis depends on proline 2, which acts as the Schiff-base intermediate with DNA. The Proton donor role is filled by glutamate 3. Lysine 58 serves as the catalytic Proton donor; for beta-elimination activity. Residues histidine 92, arginine 111, and arginine 152 each contribute to the DNA site. The segment at 237-271 (YVYGKVQKPCRICNNIITLIRQNGRSTYFCNACQN) adopts an FPG-type zinc-finger fold. Arginine 261 serves as the catalytic Proton donor; for delta-elimination activity.

The protein belongs to the FPG family. Monomer. Zn(2+) is required as a cofactor.

It carries out the reaction Hydrolysis of DNA containing ring-opened 7-methylguanine residues, releasing 2,6-diamino-4-hydroxy-5-(N-methyl)formamidopyrimidine.. The catalysed reaction is 2'-deoxyribonucleotide-(2'-deoxyribose 5'-phosphate)-2'-deoxyribonucleotide-DNA = a 3'-end 2'-deoxyribonucleotide-(2,3-dehydro-2,3-deoxyribose 5'-phosphate)-DNA + a 5'-end 5'-phospho-2'-deoxyribonucleoside-DNA + H(+). In terms of biological role, involved in base excision repair of DNA damaged by oxidation or by mutagenic agents. Acts as a DNA glycosylase that recognizes and removes damaged bases. Has a preference for oxidized purines, such as 7,8-dihydro-8-oxoguanine (8-oxoG). Has AP (apurinic/apyrimidinic) lyase activity and introduces nicks in the DNA strand. Cleaves the DNA backbone by beta-delta elimination to generate a single-strand break at the site of the removed base with both 3'- and 5'-phosphates. The chain is Formamidopyrimidine-DNA glycosylase from Wolbachia pipientis subsp. Culex pipiens (strain wPip).